The sequence spans 243 residues: Leucinostatins biosynthesis cluster protein S (243 aa).

In terms of biological role, part of the gene cluster that mediates the biosynthesis of the lipopeptide antibiotics leucinostatins that show extensive biological activities, including antimalarial, antiviral, antibacterial, antifungal, and antitumor activities, as well as phytotoxic. The function of lcsS within the leucinostatins biosynthesis has not been identified yet. This is Leucinostatins biosynthesis cluster protein S from Purpureocillium lilacinum (Paecilomyces lilacinus).